Here is a 65-residue protein sequence, read N- to C-terminus: Large ribosomal subunit protein uL29 (65 aa).

It belongs to the universal ribosomal protein uL29 family.

This is Large ribosomal subunit protein uL29 from Bacteroides fragilis (strain ATCC 25285 / DSM 2151 / CCUG 4856 / JCM 11019 / LMG 10263 / NCTC 9343 / Onslow / VPI 2553 / EN-2).